The sequence spans 385 residues: MAKEITVLGSTGSIGRQTLEVVAAHPGRFRVAALVAARNDELLAAQVRRFRPRLAVLLDEERARVLAEMVSDPGIRILAGEEGLMAAACLEGVELVVAAMVGIRSLKAILAALEAGKDIALANKEVLVAAGQLVMDRARRLSRQIIPVDSEHSAIFQCLRQGGRVAEVIITASGGPLRQMPRAEMANVTPEQALNHPTWVMGPKITIDSATLMNKGLEVIEAKHLFNLDFDQIKVLIHPQSVVHALVRYSDGALFAQLGPADMRLPIQYALTWPERWDLDVQPLDLAALGHLEFALPDLERFPCLELALQAGRAGGTYPAVLSAADEVAVEYFLAGKITLTAISQVVGRVLDEHQPEPVPDLEGILAADAWARRRAGAVAEGLSF.

NADPH contacts are provided by T11, G12, S13, I14, A37, R38, N39, and N123. Position 124 (K124) interacts with 1-deoxy-D-xylulose 5-phosphate. E125 contacts NADPH. Residue D149 coordinates Mn(2+). 4 residues coordinate 1-deoxy-D-xylulose 5-phosphate: S150, E151, S173, and H196. E151 is a binding site for Mn(2+). An NADPH-binding site is contributed by G202. Positions 209, 214, 215, and 218 each coordinate 1-deoxy-D-xylulose 5-phosphate. E218 lines the Mn(2+) pocket.

The protein belongs to the DXR family. Mg(2+) serves as cofactor. The cofactor is Mn(2+).

The catalysed reaction is 2-C-methyl-D-erythritol 4-phosphate + NADP(+) = 1-deoxy-D-xylulose 5-phosphate + NADPH + H(+). It functions in the pathway isoprenoid biosynthesis; isopentenyl diphosphate biosynthesis via DXP pathway; isopentenyl diphosphate from 1-deoxy-D-xylulose 5-phosphate: step 1/6. In terms of biological role, catalyzes the NADPH-dependent rearrangement and reduction of 1-deoxy-D-xylulose-5-phosphate (DXP) to 2-C-methyl-D-erythritol 4-phosphate (MEP). In Moorella thermoacetica (strain ATCC 39073 / JCM 9320), this protein is 1-deoxy-D-xylulose 5-phosphate reductoisomerase.